Reading from the N-terminus, the 349-residue chain is ATPase GET3 (349 aa).

ATP is bound at residue 26–33 (KGGVGKTT). Asp-57 is a catalytic residue. ATP is bound by residues Glu-243 and Asn-270. Residues Cys-280 and Cys-283 each coordinate Zn(2+).

This sequence belongs to the arsA ATPase family. In terms of assembly, homodimer. Component of the Golgi to ER traffic (GET) complex, which is composed of GET1, GET2 and GET3. Within the complex, GET1 and GET2 form a heterotetramer which is stabilized by phosphatidylinositol binding and which binds to the GET3 homodimer. Interacts with the chloride channel protein GEF1.

It is found in the cytoplasm. The protein resides in the endoplasmic reticulum. Its subcellular location is the golgi apparatus. Its function is as follows. ATPase required for the post-translational delivery of tail-anchored (TA) proteins to the endoplasmic reticulum. Recognizes and selectively binds the transmembrane domain of TA proteins in the cytosol. This complex then targets to the endoplasmic reticulum by membrane-bound receptors GET1 and GET2, where the tail-anchored protein is released for insertion. This process is regulated by ATP binding and hydrolysis. ATP binding drives the homodimer towards the closed dimer state, facilitating recognition of newly synthesized TA membrane proteins. ATP hydrolysis is required for insertion. Subsequently, the homodimer reverts towards the open dimer state, lowering its affinity for the GET1-GET2 receptor, and returning it to the cytosol to initiate a new round of targeting. Cooperates with the HDEL receptor ERD2 to mediate the ATP-dependent retrieval of resident ER proteins that contain a C-terminal H-D-E-L retention signal from the Golgi to the ER. Involved in low-level resistance to the oxyanions arsenite and arsenate, and in heat tolerance. The polypeptide is ATPase GET3 (Clavispora lusitaniae (strain ATCC 42720) (Yeast)).